A 278-amino-acid polypeptide reads, in one-letter code: Envelope glycoprotein L (278 aa).

The N-terminal stretch at 1-30 (MCRRPDCGFSFSPGPVILLWCCLLLPIVSS) is a signal peptide. Positions 43–256 (VPAECPELTR…DKYYAGLPPE (214 aa)) constitute a gL betaherpesvirus-type domain. Cys-154 and Cys-159 are joined by a disulfide.

The protein belongs to the herpesviridae glycoprotein L (gL) family. Betaherpesvirinae gL subfamily. In terms of assembly, interacts with glycoprotein H (gH); this interaction is necessary for the correct processing and cell surface expression of gH. Forms the envelope pentamer complex (PC) composed of gH, gL, UL128, UL130, and UL131A. The pentamer interacts with host NRP2. Forms the envelope trimer complex composed of gH, gL, and gO. The trimer interacts with host PDGFRA. The trimer also interacts with host EPHA2.

Its subcellular location is the virion membrane. The protein resides in the host cell membrane. It localises to the host Golgi apparatus. The protein localises to the host trans-Golgi network. Its function is as follows. The heterodimer glycoprotein H-glycoprotein L is required for the fusion of viral and plasma membranes leading to virus entry into the host cell. Acts as a functional inhibitor of gH and maintains gH in an inhibited form. Upon binding to host integrins, gL dissociates from gH leading to activation of the viral fusion glycoproteins gB and gH. In human cytomegalovirus, forms two distincts complexes to mediate viral entry, a trimer and a pentamer at the surface of the virion envelope. The gH-gL-gO trimer is required for infection in fibroblasts by interacting with host PDGFRA, and in glioblastoma cells by interacting with host EPHA2. The gH-gL-UL128-UL130-UL131A pentamer is essential for viral entry in epithelial, endothelial and myeloid cells via interaction with host NRP2. The chain is Envelope glycoprotein L from Human cytomegalovirus (strain 5035) (HHV-5).